We begin with the raw amino-acid sequence, 412 residues long: Phosphoglycerate kinase (412 aa).

Substrate is bound by residues 22–24 (DFN), Arg-37, 60–63 (HLGK), Arg-120, and Arg-172. ATP contacts are provided by residues Lys-223, Gly-310, Glu-341, and 368-371 (GGDS).

It belongs to the phosphoglycerate kinase family. Monomer.

It localises to the cytoplasm. It catalyses the reaction (2R)-3-phosphoglycerate + ATP = (2R)-3-phospho-glyceroyl phosphate + ADP. It participates in carbohydrate degradation; glycolysis; pyruvate from D-glyceraldehyde 3-phosphate: step 2/5. The chain is Phosphoglycerate kinase from Spiroplasma citri.